Here is a 135-residue protein sequence, read N- to C-terminus: Small ribosomal subunit protein uS9 (135 aa).

This sequence belongs to the universal ribosomal protein uS9 family.

This chain is Small ribosomal subunit protein uS9, found in Petrotoga mobilis (strain DSM 10674 / SJ95).